The primary structure comprises 83 residues: Small ribosomal subunit protein eS21 (83 aa).

It belongs to the eukaryotic ribosomal protein eS21 family. Component of the 40S small ribosomal subunit.

The protein resides in the cytoplasm. It localises to the cytosol. It is found in the rough endoplasmic reticulum. This chain is Small ribosomal subunit protein eS21 (RpS21), found in Ixodes scapularis (Black-legged tick).